A 122-amino-acid chain; its full sequence is NADH-ubiquinone oxidoreductase chain 3 (122 aa).

3 helical membrane passes run valine 12–valine 32, leucine 66–valine 86, and valine 91–isoleucine 111.

Belongs to the complex I subunit 3 family.

The protein localises to the mitochondrion membrane. The enzyme catalyses a ubiquinone + NADH + 5 H(+)(in) = a ubiquinol + NAD(+) + 4 H(+)(out). In terms of biological role, core subunit of the mitochondrial membrane respiratory chain NADH dehydrogenase (Complex I) that is believed to belong to the minimal assembly required for catalysis. Complex I functions in the transfer of electrons from NADH to the respiratory chain. The immediate electron acceptor for the enzyme is believed to be ubiquinone. The protein is NADH-ubiquinone oxidoreductase chain 3 (NAD3) of Reclinomonas americana.